A 328-amino-acid chain; its full sequence is Tetraacyldisaccharide 4'-kinase (328 aa).

An ATP-binding site is contributed by 55 to 62 (TAGGNGKT).

Belongs to the LpxK family.

It catalyses the reaction a lipid A disaccharide + ATP = a lipid IVA + ADP + H(+). It participates in glycolipid biosynthesis; lipid IV(A) biosynthesis; lipid IV(A) from (3R)-3-hydroxytetradecanoyl-[acyl-carrier-protein] and UDP-N-acetyl-alpha-D-glucosamine: step 6/6. Functionally, transfers the gamma-phosphate of ATP to the 4'-position of a tetraacyldisaccharide 1-phosphate intermediate (termed DS-1-P) to form tetraacyldisaccharide 1,4'-bis-phosphate (lipid IVA). The chain is Tetraacyldisaccharide 4'-kinase from Escherichia coli (strain SMS-3-5 / SECEC).